Consider the following 138-residue polypeptide: Transcription antitermination protein NusB (138 aa).

The protein belongs to the NusB family.

Its function is as follows. Involved in transcription antitermination. Required for transcription of ribosomal RNA (rRNA) genes. Binds specifically to the boxA antiterminator sequence of the ribosomal RNA (rrn) operons. The chain is Transcription antitermination protein NusB from Serratia proteamaculans (strain 568).